The sequence spans 326 residues: Glycerol-3-phosphate dehydrogenase [NAD(P)+] (326 aa).

Residues Trp-13, Arg-33, and Lys-107 each coordinate NADPH. Positions 107, 135, and 137 each coordinate sn-glycerol 3-phosphate. Ala-139 contributes to the NADPH binding site. Sn-glycerol 3-phosphate contacts are provided by Lys-190, Asp-243, Ser-253, Arg-254, and Asn-255. The active-site Proton acceptor is Lys-190. Arg-254 is an NADPH binding site. Residues Leu-273 and Glu-275 each coordinate NADPH.

It belongs to the NAD-dependent glycerol-3-phosphate dehydrogenase family.

The protein localises to the cytoplasm. The enzyme catalyses sn-glycerol 3-phosphate + NAD(+) = dihydroxyacetone phosphate + NADH + H(+). The catalysed reaction is sn-glycerol 3-phosphate + NADP(+) = dihydroxyacetone phosphate + NADPH + H(+). Its pathway is membrane lipid metabolism; glycerophospholipid metabolism. Its function is as follows. Catalyzes the reduction of the glycolytic intermediate dihydroxyacetone phosphate (DHAP) to sn-glycerol 3-phosphate (G3P), the key precursor for phospholipid synthesis. In Brucella ovis (strain ATCC 25840 / 63/290 / NCTC 10512), this protein is Glycerol-3-phosphate dehydrogenase [NAD(P)+].